Reading from the N-terminus, the 250-residue chain is tRNA (guanine-N(1)-)-methyltransferase (250 aa).

S-adenosyl-L-methionine is bound by residues glycine 116 and 136 to 141 (IGDYVL).

The protein belongs to the RNA methyltransferase TrmD family. In terms of assembly, homodimer.

It is found in the cytoplasm. The enzyme catalyses guanosine(37) in tRNA + S-adenosyl-L-methionine = N(1)-methylguanosine(37) in tRNA + S-adenosyl-L-homocysteine + H(+). Its function is as follows. Specifically methylates guanosine-37 in various tRNAs. In Pseudomonas putida (strain GB-1), this protein is tRNA (guanine-N(1)-)-methyltransferase.